The sequence spans 418 residues: Tryptophan synthase beta chain (418 aa).

Lysine 109 carries the N6-(pyridoxal phosphate)lysine modification.

It belongs to the TrpB family. Tetramer of two alpha and two beta chains. Pyridoxal 5'-phosphate serves as cofactor.

It catalyses the reaction (1S,2R)-1-C-(indol-3-yl)glycerol 3-phosphate + L-serine = D-glyceraldehyde 3-phosphate + L-tryptophan + H2O. Its pathway is amino-acid biosynthesis; L-tryptophan biosynthesis; L-tryptophan from chorismate: step 5/5. In terms of biological role, the beta subunit is responsible for the synthesis of L-tryptophan from indole and L-serine. The sequence is that of Tryptophan synthase beta chain from Thermus thermophilus (strain ATCC 27634 / DSM 579 / HB8).